Reading from the N-terminus, the 210-residue chain is Mitochondrial import receptor subunit TOM20-2 (210 aa).

The residue at position 1 (Met1) is an N-acetylmethionine. Over 1–178 (MEFSTADFER…SSKKKKRNTE (178 aa)) the chain is Cytoplasmic. TPR repeat units follow at residues 42 to 75 (LLEL…NPGK) and 83 to 120 (ANAY…DPGN). Residues 151-161 (GGGGGGGGGGM) show a composition bias toward gly residues. The interval 151–172 (GGGGGGGGGGMASSNVSQSSKK) is disordered. The chain crosses the membrane as a helical span at residues 179–199 (FTYDVCGWIILACGIVAWVGM). Residues 200-210 (AKSLGPPPPAR) are Mitochondrial intermembrane-facing.

Belongs to the Tom20 family. As to quaternary structure, forms part of the preprotein translocase complex of the outer mitochondrial membrane (TOM complex) which consists of at least 6 different proteins (TOM5, TOM6, TOM7, TOM20, TOM22/TOM9 and TOM40). Component of a mitochondrial large protein complex that contains, at least, MIC60, DGS1, TOM40, TOM20 proteins, and petC/RISP. Post-translationally, the N-terminus is blocked. Expressed in roots, flowers, young cotyledons and leaves.

The protein localises to the mitochondrion outer membrane. Central component of the receptor complex responsible for the recognition and translocation of cytosolically synthesized mitochondrial preproteins. Together with TOM22 functions as the transit peptide receptor at the surface of the mitochondrion outer membrane and facilitates the movement of preproteins into the translocation pore. The protein is Mitochondrial import receptor subunit TOM20-2 of Arabidopsis thaliana (Mouse-ear cress).